The chain runs to 143 residues: Large ribosomal subunit protein uL11 (143 aa).

The protein belongs to the universal ribosomal protein uL11 family. In terms of assembly, part of the ribosomal stalk of the 50S ribosomal subunit. Interacts with L10 and the large rRNA to form the base of the stalk. L10 forms an elongated spine to which L12 dimers bind in a sequential fashion forming a multimeric L10(L12)X complex. Post-translationally, one or more lysine residues are methylated.

Functionally, forms part of the ribosomal stalk which helps the ribosome interact with GTP-bound translation factors. The chain is Large ribosomal subunit protein uL11 from Dechloromonas aromatica (strain RCB).